A 279-amino-acid polypeptide reads, in one-letter code: Nitrate import permease protein NrtB (279 aa).

One can recognise an ABC transmembrane type-1 domain in the interval 86–270; it reads IAASLQRVAV…LLNALVGFIA (185 aa). 6 consecutive transmembrane segments (helical) span residues 98-118, 124-144, 151-171, 196-216, 217-237, and 249-269; these read LMAA…VLMF, IFQV…LAAF, AIFV…AVGV, VLLP…IGLS, WLAI…FFIW, and ILAI…VGFI.

Belongs to the binding-protein-dependent transport system permease family. CysTW subfamily. In terms of assembly, the complex is composed of two ATP-binding proteins (NrtC and NrtD), two transmembrane proteins (NrtB) and a solute-binding protein (NrtA).

It localises to the cell inner membrane. Functionally, part of the ABC transporter complex NrtABCD involved in nitrate uptake. The complex is probably also involved in nitrite transport. Probably responsible for the translocation of the substrate across the membrane. The chain is Nitrate import permease protein NrtB from Leptolyngbya laminosa (Phormidium laminosum).